We begin with the raw amino-acid sequence, 198 residues long: Beta-crystallin A1 (198 aa).

Residues 1–13 are N-terminal arm; it reads MAQINPLPVPLGP. 2 consecutive Beta/gamma crystallin 'Greek key' domains span residues 14 to 53 and 54 to 100; these read WKIT…KVEC and GGWI…RPIC. Positions 101 to 106 are connecting peptide; it reads SANHKE. 2 consecutive Beta/gamma crystallin 'Greek key' domains span residues 107–148 and 149–197; these read SKLV…KVQC and GSWV…RRIQ.

Belongs to the beta/gamma-crystallin family. Homo/heterodimer, or complexes of higher-order. The structure of beta-crystallin oligomers seems to be stabilized through interactions between the N-terminal arms.

Its function is as follows. Crystallins are the dominant structural components of the vertebrate eye lens. The sequence is that of Beta-crystallin A1 from Rana temporaria (European common frog).